An 858-amino-acid chain; its full sequence is Elongation factor 2 (858 aa).

Residues 17–362 (ANIRNMSVIA…MITIHLPSPV (346 aa)) form the tr-type G domain. Residue 26-33 (AHVDHGKS) participates in GTP binding. A Phosphothreonine modification is found at Thr-54. At Thr-57 the chain carries Phosphothreonine; by EEF2K. Phosphothreonine is present on Thr-59. An N6-succinyllysine modification is found at Lys-152. GTP contacts are provided by residues 158 to 161 (NKMD) and 216 to 218 (SGL). Lys-235 is modified (N6-acetyllysine). Position 239 is an N6-acetyllysine; alternate (Lys-239). Lys-239 participates in a covalent cross-link: Glycyl lysine isopeptide (Lys-Gly) (interchain with G-Cter in SUMO1); alternate. A Phosphotyrosine; by CSK modification is found at Tyr-265. An N6-acetyllysine; alternate modification is found at Lys-272. Lys-272 bears the N6-succinyllysine; alternate mark. Lys-275 carries the N6-acetyllysine modification. Lys-322 is covalently cross-linked (Glycyl lysine isopeptide (Lys-Gly) (interchain with G-Cter in SUMO)). The residue at position 325 (Ser-325) is a Phosphoserine. Tyr-373 is modified (phosphotyrosine; by CSK). Thr-435 bears the Phosphothreonine mark. N6-acetyllysine occurs at positions 439 and 445. Phosphoserine is present on Ser-502. At Lys-525 the chain carries N6,N6,N6-trimethyllysine; by EEF2KMT. A Glycyl lysine isopeptide (Lys-Gly) (interchain with G-Cter in SUMO) cross-link involves residue Lys-529. Lys-572 bears the N6-succinyllysine mark. The residue at position 595 (Ser-595) is a Phosphoserine; by CDK2. Lys-619 is modified (N6-acetyllysine). Residue His-715 is modified to Diphthamide.

The protein belongs to the TRAFAC class translation factor GTPase superfamily. Classic translation factor GTPase family. EF-G/EF-2 subfamily. Binds to 80S ribosomes. Actively translating ribosomes show mutually exclusive binding of eIF5a (EIF5A or EIF5A2) and EEF2/eEF2. Interacts with SERBP1; interaction sequesters EEF2/eEF2 at the A-site of the ribosome, thereby blocking the interaction sites of the mRNA-tRNA complex, promoting ribosome stabilization and hibernation. Interacts with HABP4; interaction takes place at the A-site of hibernating ribosomes and promotes ribosome stabilization. Component of the mRNA surveillance SURF complex, at least composed of ERF1, ERF3 (ERF3A or ERF3B), EEF2, UPF1/RENT1, SMG1, SMG8 and SMG9. Interacts with RBPMS2. Post-translationally, phosphorylation by EF-2 kinase completely inactivates EF-2; it requires prior phosphorylation by CDK2 at Ser-595 during mitotic prometaphase. Phosphorylation by CSK promotes SUMOylation, proteolytic cleavage, and nuclear translocation if the C-terminal fragment. In terms of processing, diphthamide is 2-[3-carboxyamido-3-(trimethyl-ammonio)propyl]histidine. ISGylated. Post-translationally, proteolytically processed at two sites following phosphorylation by CSK. In terms of processing, SUMOylated following phosphorylation by CSK, promotes proteolytic cleavage.

The protein localises to the cytoplasm. The protein resides in the nucleus. It carries out the reaction GTP + H2O = GDP + phosphate + H(+). In terms of biological role, catalyzes the GTP-dependent ribosomal translocation step during translation elongation. During this step, the ribosome changes from the pre-translocational (PRE) to the post-translocational (POST) state as the newly formed A-site-bound peptidyl-tRNA and P-site-bound deacylated tRNA move to the P and E sites, respectively. Catalyzes the coordinated movement of the two tRNA molecules, the mRNA and conformational changes in the ribosome. The protein is Elongation factor 2 (EEF2) of Callithrix jacchus (White-tufted-ear marmoset).